Here is a 464-residue protein sequence, read N- to C-terminus: Peptidase inhibitor 16 (464 aa).

A signal peptide spans 1-27 (MHGSGSLLACLLPPLLLLGAAPGPAGA). Residues 37–165 (VELHNLYRTQ…TNIHLLVCNY (129 aa)) enclose the SCP domain. N-linked (GlcNAc...) asparagine glycosylation is present at N114. Disordered stretches follow at residues 208-241 (DLSSLVPEAPSSLATEASSSRREGIDSSLATEPP), 260-281 (VETKAPSSLVTEDSPSMATKTP), 304-347 (PATL…LMGT), and 386-412 (TTLKHKGHSSSKSLSNSPSASATANAV). Positions 311–325 (STHDPIPKSADKEAS) are enriched in basic and acidic residues. The span at 395-411 (SSKSLSNSPSASATANA) shows a compositional bias: low complexity.

It belongs to the CRISP family. In terms of assembly, interacts with PSP94/MSMB. In terms of processing, N-glycosylated.

It localises to the secreted. Functionally, may inhibit cardiomyocyte growth. This is Peptidase inhibitor 16 (PI16) from Bos taurus (Bovine).